Reading from the N-terminus, the 185-residue chain is Ribosome-recycling factor (185 aa).

The protein belongs to the RRF family.

It localises to the cytoplasm. Functionally, responsible for the release of ribosomes from messenger RNA at the termination of protein biosynthesis. May increase the efficiency of translation by recycling ribosomes from one round of translation to another. This Rhodococcus erythropolis (strain PR4 / NBRC 100887) protein is Ribosome-recycling factor.